The primary structure comprises 323 residues: Deaminated glutathione amidase (323 aa).

The N-terminal 33 residues, Met-1–Thr-33, are a transit peptide targeting the mitochondrion. Positions Leu-42–Leu-294 constitute a CN hydrolase domain. Glu-82 acts as the Proton acceptor in catalysis. The active-site Proton donor is Lys-157. Cys-199 (nucleophile) is an active-site residue.

It belongs to the carbon-nitrogen hydrolase superfamily. NIT1/NIT2 family. As to expression, expressed in most tissues with higher expression in adult liver and kidney as well as in fetal adrenal gland and skeletal muscle.

The protein resides in the mitochondrion. Its subcellular location is the cytoplasm. It catalyses the reaction N-(4-oxoglutaryl)-L-cysteinylglycine + H2O = L-cysteinylglycine + 2-oxoglutarate. The catalysed reaction is N-(4-carboxy-4-oxobutanoyl)-L-ethylglycylglycine + H2O = N-(2-aminobutanoyl)glycine + 2-oxoglutarate. Its function is as follows. Catalyzes the hydrolysis of the amide bond in N-(4-oxoglutarate)-L-cysteinylglycine (deaminated glutathione), a metabolite repair reaction to dispose of the harmful deaminated glutathione. Possesses amidase activity toward deaminated ophthalmate in vitro. Plays a role in cell growth and apoptosis: loss of expression promotes cell growth, resistance to DNA damage stress and increased incidence to NMBA-induced tumors. Has tumor suppressor properties that enhances the apoptotic responsiveness in cancer cells; this effect is additive to the tumor suppressor activity of FHIT. It is also a negative regulator of primary T-cells. This is Deaminated glutathione amidase from Mus musculus (Mouse).